Reading from the N-terminus, the 823-residue chain is Zygotic DNA replication licensing factor mcm6 (823 aa).

A C4-type zinc finger spans residues C159–C186. The region spanning L347 to V554 is the MCM domain. G397 to S404 contributes to the ATP binding site. The short motif at S529–D532 is the Arginine finger element. A disordered region spans residues N666–K713. Residues L667–Q680 show a composition bias toward acidic residues. The segment covering G692 to G702 has biased composition (low complexity).

The protein belongs to the MCM family. Component of the mcm2-7 complex (RLF-M). The complex forms a toroidal hexameric ring with the proposed subunit order mcm2-mcm6-mcm4-mcm7-mcm3-mcm5. Begins to associate with zmcm3, mcm4 and mcm7 into mcm complexes at the neurula stage.

It is found in the nucleus. It catalyses the reaction ATP + H2O = ADP + phosphate + H(+). In terms of biological role, acts as a component of the mcm2-7 complex (mcm complex) which is the putative replicative helicase essential for 'once per cell cycle' DNA replication initiation and elongation in eukaryotic cells. The active ATPase sites in the mcm2-7 ring are formed through the interaction surfaces of two neighboring subunits such that a critical structure of a conserved arginine finger motif is provided in trans relative to the ATP-binding site of the Walker A box of the adjacent subunit. The six ATPase active sites, however, are likely to contribute differentially to the complex helicase activity. The existence of maternal and zygotic forms of mcm3 and mcm6 suggests that specific forms of mcm2-7 complexes may be used during different stages of development. May replace mmcm6 in the mcm2-7 complex. This chain is Zygotic DNA replication licensing factor mcm6, found in Xenopus tropicalis (Western clawed frog).